We begin with the raw amino-acid sequence, 248 residues long: Adenosylcobinamide-GDP ribazoletransferase (248 aa).

Helical transmembrane passes span F36–L56, F59–G79, G114–L134, Y137–L157, I170–L190, and A199–L219.

This sequence belongs to the CobS family. Requires Mg(2+) as cofactor.

The protein resides in the cell membrane. The catalysed reaction is alpha-ribazole + adenosylcob(III)inamide-GDP = adenosylcob(III)alamin + GMP + H(+). It catalyses the reaction alpha-ribazole 5'-phosphate + adenosylcob(III)inamide-GDP = adenosylcob(III)alamin 5'-phosphate + GMP + H(+). It functions in the pathway cofactor biosynthesis; adenosylcobalamin biosynthesis; adenosylcobalamin from cob(II)yrinate a,c-diamide: step 7/7. Its function is as follows. Joins adenosylcobinamide-GDP and alpha-ribazole to generate adenosylcobalamin (Ado-cobalamin). Also synthesizes adenosylcobalamin 5'-phosphate from adenosylcobinamide-GDP and alpha-ribazole 5'-phosphate. This Clostridium botulinum (strain Okra / Type B1) protein is Adenosylcobinamide-GDP ribazoletransferase.